Here is a 450-residue protein sequence, read N- to C-terminus: MSDSKEPSVQQLGLLEEEQLRGLGFRQTRGYKSLAGCLGHGALVLQLLSFTLLAGLLIQVSKFPSSISQEQSKQDAIYQNLTQLKAAVGEFSEKSKLQEIYQELTQLKAAVGELPEKSKQQEIYQELTRLKAAVGELPEKSKQQEIYQELTRLKAAVGELPEKSKQQEIYQELTRLKAAVGELPEKSKQQEIYQELTRLKAAVGELPEKSKQQEIYQELTRLKAAVGELPEKSKQQEIYQELTRLKAAVGELPEKSKQQEIYQELTRLKAAVGELPEKSKQQEIYQELTQLKAAVERLCRPCPWEWTFFQGNCYFMSNSQRDWHDSVTACQEVGAQLVVIKSAEEQNFLQLQSSRSNRFAWMGLSDLNQEGTWQWVDGSPLSPSFKQYWNRGEPNNVGEEDCAEFSGNGWNDDKCNLAKFWICKKSAASCSRDEEQFLSPAPATPNPPPV.

The Cytoplasmic segment spans residues 1-37 (MSDSKEPSVQQLGLLEEEQLRGLGFRQTRGYKSLAGC). 3 short sequence motifs (endocytosis signal) span residues 14 to 15 (LL), 16 to 18 (EEE), and 31 to 34 (YKSL). The helical; Signal-anchor for type II membrane protein transmembrane segment at 38–58 (LGHGALVLQLLSFTLLAGLLI) threads the bilayer. The Extracellular segment spans residues 59–450 (QVSKFPSSIS…APATPNPPPV (392 aa)). Asparagine 80 carries N-linked (GlcNAc...) asparagine glycosylation. A run of 9 repeats spans residues 96 to 118 (KLQEIYQELTQLKAAVGELPEKS), 119 to 141 (KQQEIYQELTRLKAAVGELPEKS), 142 to 164 (KQQEIYQELTRLKAAVGELPEKS), 165 to 187 (KQQEIYQELTRLKAAVGELPEKS), 188 to 210 (KQQEIYQELTRLKAAVGELPEKS), 211 to 233 (KQQEIYQELTRLKAAVGELPEKS), 234 to 256 (KQQEIYQELTRLKAAVGELPEKS), 257 to 279 (KQQEIYQELTRLKAAVGELPEKS), and 280 to 303 (KQQEIYQELTQLKAAVERLCRPCP). Positions 96–303 (KLQEIYQELT…AVERLCRPCP (208 aa)) are 9 X approximate tandem repeats. 3 disulfide bridges follow: cysteine 302/cysteine 313, cysteine 330/cysteine 423, and cysteine 402/cysteine 415. The region spanning 309–424 (FQGNCYFMSN…CNLAKFWICK (116 aa)) is the C-type lectin domain. 6 residues coordinate Ca(2+): glutamate 393, asparagine 395, valine 397, glutamate 400, asparagine 411, and aspartate 412.

As to quaternary structure, homotetramer. Interacts with C1QBP; the interaction is indicative for a C1q:C1QBP:CD209 signaling complex. Interacts with ICAM2 and ICAM3 by binding to mannose-like carbohydrates. Interacts (via C-type lectin domain) with CEACAM1 (via Lewis X moieties); this interaction is regulated by the glycosylation pattern of CEACAM1 on cell types and regulates contact between dendritic cells and neutrophils.

The protein localises to the membrane. Its function is as follows. Pathogen-recognition receptor expressed on the surface of immature dendritic cells (DCs) and involved in initiation of primary immune response. Thought to mediate the endocytosis of pathogens which are subsequently degraded in lysosomal compartments. The receptor returns to the cell membrane surface and the pathogen-derived antigens are presented to resting T-cells via MHC class II proteins to initiate the adaptive immune response. Probably recognizes in a calcium-dependent manner high mannose N-linked oligosaccharides in a variety of pathogen antigens. Functionally, on DCs it is a high affinity receptor for ICAM2 and ICAM3 by binding to mannose-like carbohydrates. May act as a DC rolling receptor that mediates transendothelial migration of DC presursors from blood to tissues by binding endothelial ICAM2. Seems to regulate DC-induced T-cell proliferation by binding to ICAM3 on T-cells in the immunological synapse formed between DC and T-cells. This chain is CD209 antigen (CD209), found in Hylobates lar (Lar gibbon).